Consider the following 408-residue polypeptide: Large ribosomal subunit protein uL4 (408 aa).

Residues 58-98 (PYAVSKKAGHQTSAESWGTGRAVSRIPRVPGGGTHRAGQGA) form a disordered region.

This sequence belongs to the universal ribosomal protein uL4 family.

The sequence is that of Large ribosomal subunit protein uL4 (RPL4) from Prunus armeniaca (Apricot).